We begin with the raw amino-acid sequence, 314 residues long: 2-dehydro-3-deoxygluconokinase (314 aa).

Substrate is bound by residues 28 to 32 (GDTLN), tyrosine 88, 102 to 104 (YWR), and arginine 170. ATP contacts are provided by residues 168 to 170 (NYR), 228 to 233 (KCGKNG), and 260 to 263 (SAGD). Aspartate 263 provides a ligand contact to substrate. Aspartate 263 functions as the Proton acceptor in the catalytic mechanism.

The protein belongs to the carbohydrate kinase PfkB family.

It catalyses the reaction 2-dehydro-3-deoxy-D-gluconate + ATP = 2-dehydro-3-deoxy-6-phospho-D-gluconate + ADP + H(+). It functions in the pathway carbohydrate acid metabolism; 2-dehydro-3-deoxy-D-gluconate degradation; D-glyceraldehyde 3-phosphate and pyruvate from 2-dehydro-3-deoxy-D-gluconate: step 1/2. Catalyzes the phosphorylation of 2-keto-3-deoxygluconate (KDG) to produce 2-keto-3-deoxy-6-phosphogluconate (KDPG). The protein is 2-dehydro-3-deoxygluconokinase (kdgK) of Haemophilus influenzae (strain ATCC 51907 / DSM 11121 / KW20 / Rd).